We begin with the raw amino-acid sequence, 241 residues long: Transmembrane protein 176A (241 aa).

The residue at position 38 (serine 38) is a Phosphoserine. The next 4 helical transmembrane spans lie at 65–85 (WVMQ…LYIF), 93–113 (SGAP…AFIY), 127–147 (LLAL…AGRF), and 193–213 (LFIS…LASL).

This sequence belongs to the TMEM176 family. As to quaternary structure, interacts with MCOLN2.

It is found in the membrane. The protein is Transmembrane protein 176A (TMEM176A) of Bos taurus (Bovine).